The sequence spans 208 residues: Large ribosomal subunit protein uL4 (208 aa).

A disordered region spans residues Arg44–Ile89. Residues Gly60–Gly71 show a composition bias toward basic residues.

Belongs to the universal ribosomal protein uL4 family. As to quaternary structure, part of the 50S ribosomal subunit.

Functionally, one of the primary rRNA binding proteins, this protein initially binds near the 5'-end of the 23S rRNA. It is important during the early stages of 50S assembly. It makes multiple contacts with different domains of the 23S rRNA in the assembled 50S subunit and ribosome. In terms of biological role, forms part of the polypeptide exit tunnel. In Chlorobium phaeobacteroides (strain BS1), this protein is Large ribosomal subunit protein uL4.